A 289-amino-acid chain; its full sequence is Golgi to ER traffic protein 2 (289 aa).

A compositionally biased stretch (basic and acidic residues) spans 1–10; that stretch reads MSEVSEAEKR. Residues 1-68 are disordered; the sequence is MSEVSEAEKR…LQRGSNSGQS (68 aa). Topologically, residues 1-153 are cytoplasmic; the sequence is MSEVSEAEKR…VGVHQFQVRQ (153 aa). Basic residues predominate over residues 11 to 21; the sequence is RILREKRKQKF. The segment covering 33 to 68 has biased composition (polar residues); it reads ITTQQPGGASGDSTVTSAEISDNEGSLQRGSNSGQS. A helical transmembrane segment spans residues 154 to 173; sequence LKAYMLLLRWAILLPFIYYV. At 174–196 the chain is on the lumenal side; it reads MHPGTAHWLHTSRFLHFVMEPRN. The chain crosses the membrane as a helical span at residues 197–216; sequence FFMVFTTFEVASISIYYQVL. The Cytoplasmic segment spans residues 217 to 263; the sequence is LTLERTNKVNSLSYSSKLVTWAGLVPDGMLPIDNLQGKVVVALHYWD. A helical transmembrane segment spans residues 264–284; sequence ILSMYLTDLSLCLVAAGLMKY. The Lumenal segment spans residues 285-289; the sequence is YHAAP.

This sequence belongs to the GET2 family. In terms of assembly, component of the Golgi to ER traffic (GET) complex, which is composed of GET1, GET2 and GET3. Within the complex, GET1 and GET2 form a heterotetramer which is stabilized by phosphatidylinositol binding and which binds to the GET3 homodimer.

The protein resides in the endoplasmic reticulum membrane. Its subcellular location is the golgi apparatus membrane. Functionally, required for the post-translational delivery of tail-anchored (TA) proteins to the endoplasmic reticulum. Together with GET1, acts as a membrane receptor for soluble GET3, which recognizes and selectively binds the transmembrane domain of TA proteins in the cytosol. The GET complex cooperates with the HDEL receptor ERD2 to mediate the ATP-dependent retrieval of resident ER proteins that contain a C-terminal H-D-E-L retention signal from the Golgi to the ER. The sequence is that of Golgi to ER traffic protein 2 from Eremothecium gossypii (strain ATCC 10895 / CBS 109.51 / FGSC 9923 / NRRL Y-1056) (Yeast).